The following is a 323-amino-acid chain: HPr kinase/phosphorylase (323 aa).

Catalysis depends on residues H146 and K167. ATP is bound at residue G161–S168. Residue S168 coordinates Mg(2+). The active-site Proton acceptor; for phosphorylation activity. Proton donor; for dephosphorylation activity is D185. The interval L209–D218 is important for the catalytic mechanism of both phosphorylation and dephosphorylation. E210 contacts Mg(2+). R250 is an active-site residue. Positions Q271–R276 are important for the catalytic mechanism of dephosphorylation.

The protein belongs to the HPrK/P family. Homohexamer. Mg(2+) is required as a cofactor.

It carries out the reaction [HPr protein]-L-serine + ATP = [HPr protein]-O-phospho-L-serine + ADP + H(+). The enzyme catalyses [HPr protein]-O-phospho-L-serine + phosphate + H(+) = [HPr protein]-L-serine + diphosphate. Functionally, catalyzes the ATP- as well as the pyrophosphate-dependent phosphorylation of a specific serine residue in HPr, a phosphocarrier protein of the phosphoenolpyruvate-dependent sugar phosphotransferase system (PTS). HprK/P also catalyzes the pyrophosphate-producing, inorganic phosphate-dependent dephosphorylation (phosphorolysis) of seryl-phosphorylated HPr (P-Ser-HPr). The polypeptide is HPr kinase/phosphorylase (Cupriavidus metallidurans (strain ATCC 43123 / DSM 2839 / NBRC 102507 / CH34) (Ralstonia metallidurans)).